The primary structure comprises 337 residues: Phosphate acyltransferase (337 aa).

The protein belongs to the PlsX family. In terms of assembly, homodimer. Probably interacts with PlsY.

The protein localises to the cytoplasm. It catalyses the reaction a fatty acyl-[ACP] + phosphate = an acyl phosphate + holo-[ACP]. Its pathway is lipid metabolism; phospholipid metabolism. Its function is as follows. Catalyzes the reversible formation of acyl-phosphate (acyl-PO(4)) from acyl-[acyl-carrier-protein] (acyl-ACP). This enzyme utilizes acyl-ACP as fatty acyl donor, but not acyl-CoA. This chain is Phosphate acyltransferase, found in Listeria welshimeri serovar 6b (strain ATCC 35897 / DSM 20650 / CCUG 15529 / CIP 8149 / NCTC 11857 / SLCC 5334 / V8).